The sequence spans 29 residues: Cyclotide vibi-B (29 aa).

Positions 1–29 (GLPVCGETCFGGTCNTPGCTCSYPICTRN) form a cross-link, cyclopeptide (Gly-Asn). Cystine bridges form between cysteine 5-cysteine 19, cysteine 9-cysteine 21, and cysteine 14-cysteine 26.

Post-translationally, this is a cyclic peptide.

In terms of biological role, probably participates in a plant defense mechanism. The protein is Cyclotide vibi-B of Viola biflora (Yellow wood violet).